The following is a 448-amino-acid chain: C4-dicarboxylate transport protein (448 aa).

The next 9 helical transmembrane spans lie at 13–33 (SLYAQVIFAVTIGVLLGHFYP), 49–69 (LIKMIIAPIIFCTVVVGIAGM), 81–101 (LALLYFEVMSTLALVVGLLVV), 149–169 (AFAKGEILQVLLFSVLFGFAL), 193–213 (IVGIIMKVAPIGAFGAMAFTI), 227–247 (LMGAFYLTCLIFVFGVLGIVS), 294–314 (VVGLVIPTGYSFNLDGTSIYL), 336–356 (TLLAVLLLTSKGAAGVTGSGF), and 357–377 (IVLAATLSAVGGVPVAGLALI).

The protein belongs to the dicarboxylate/amino acid:cation symporter (DAACS) (TC 2.A.23) family.

The protein resides in the cell inner membrane. In terms of biological role, responsible for the transport of dicarboxylates such as succinate, fumarate, and malate from the periplasm across the membrane. In Albidiferax ferrireducens (strain ATCC BAA-621 / DSM 15236 / T118) (Rhodoferax ferrireducens), this protein is C4-dicarboxylate transport protein.